The chain runs to 428 residues: Aerobic C4-dicarboxylate transport protein (428 aa).

The next 9 helical transmembrane spans lie at 5 to 27 (LFKS…GHYY), 47 to 64 (MIIA…IAGM), 77 to 99 (ALLY…VNVV), 141 to 163 (VIGA…FGFA), 184 to 206 (VIFG…AMAF), 216 to 238 (LVQL…VVVL), 289 to 311 (VVGL…YLTM), 326 to 348 (IFHQ…GVTG), and 353 to 375 (VLAA…ILGI).

Belongs to the dicarboxylate/amino acid:cation symporter (DAACS) (TC 2.A.23) family.

It localises to the cell inner membrane. In terms of biological role, responsible for the transport of dicarboxylates such as succinate, fumarate, and malate from the periplasm across the inner membrane. The chain is Aerobic C4-dicarboxylate transport protein (dctA) from Salmonella typhimurium (strain LT2 / SGSC1412 / ATCC 700720).